The sequence spans 93 residues: Acylphosphatase (93 aa).

The 87-residue stretch at 5 to 91 (RAHFLVKGFV…RGETTFRIRS (87 aa)) folds into the Acylphosphatase-like domain. Residues Arg20 and Asn38 contribute to the active site.

The protein belongs to the acylphosphatase family.

It catalyses the reaction an acyl phosphate + H2O = a carboxylate + phosphate + H(+). In Moorella thermoacetica (strain ATCC 39073 / JCM 9320), this protein is Acylphosphatase (acyP).